A 263-amino-acid chain; its full sequence is Triosephosphate isomerase (263 aa).

10 to 12 contacts substrate; the sequence is NWK. The Electrophile role is filled by His104. Residue Glu176 is the Proton acceptor of the active site. Substrate is bound by residues Gly182, Ser221, and 242–243; that span reads GG.

Belongs to the triosephosphate isomerase family. In terms of assembly, homodimer.

The protein resides in the cytoplasm. The enzyme catalyses D-glyceraldehyde 3-phosphate = dihydroxyacetone phosphate. It participates in carbohydrate biosynthesis; gluconeogenesis. The protein operates within carbohydrate degradation; glycolysis; D-glyceraldehyde 3-phosphate from glycerone phosphate: step 1/1. Involved in the gluconeogenesis. Catalyzes stereospecifically the conversion of dihydroxyacetone phosphate (DHAP) to D-glyceraldehyde-3-phosphate (G3P). The protein is Triosephosphate isomerase of Haemophilus influenzae (strain PittEE).